A 387-amino-acid chain; its full sequence is GDSL esterase/lipase At2g23540 (387 aa).

The first 32 residues, 1 to 32, serve as a signal peptide directing secretion; it reads MATRASTSSRVSPAFTFLVIFFLLSLTASVEA. S55 serves as the catalytic Nucleophile. N-linked (GlcNAc...) asparagine glycosylation is found at N139 and N159. Catalysis depends on residues D352 and H355. An N-linked (GlcNAc...) asparagine glycan is attached at N380.

Belongs to the 'GDSL' lipolytic enzyme family.

It is found in the secreted. This chain is GDSL esterase/lipase At2g23540, found in Arabidopsis thaliana (Mouse-ear cress).